The sequence spans 366 residues: MAGNTFGQLFTVTTFGESHGAGLGCIIDGCPPGLELSEADIQFDLDRRKPGTSRHVTQRREADQVEILSGVFEGKTTGTPIALLIRNTDQRSKDYGNIATSFRPGHADYTYWHKYGTRDYRGGGRSSARETAARVAAGAVAKKWLKEKFGTEITAYVTQVGEKEIRFEGCEHISQNPFFAANHSQIAELENYMDSVRKSLDSVGAKLHIEAANVPVGLGEPVFDRLDAEIAYAMMGINAVKGVEIGAGFDSVTQRGSEHGDELTPQGFLSNHSGGILGGISTGQDIHVNIAIKPTSSIATPRRSIDINGNPIELATHGRHDPCVGLRAAPIAEAMLALVLIDHALRHRAQNADVQVNTPDITLSNK.

NADP(+)-binding residues include Arg48 and Arg54. Residues 125–127 (RSS), 238–239 (NA), Gly278, 293–297 (KPTSS), and Arg319 contribute to the FMN site.

It belongs to the chorismate synthase family. As to quaternary structure, homotetramer. FMNH2 is required as a cofactor.

It carries out the reaction 5-O-(1-carboxyvinyl)-3-phosphoshikimate = chorismate + phosphate. Its pathway is metabolic intermediate biosynthesis; chorismate biosynthesis; chorismate from D-erythrose 4-phosphate and phosphoenolpyruvate: step 7/7. Its function is as follows. Catalyzes the anti-1,4-elimination of the C-3 phosphate and the C-6 proR hydrogen from 5-enolpyruvylshikimate-3-phosphate (EPSP) to yield chorismate, which is the branch point compound that serves as the starting substrate for the three terminal pathways of aromatic amino acid biosynthesis. This reaction introduces a second double bond into the aromatic ring system. The chain is Chorismate synthase from Neisseria meningitidis serogroup A / serotype 4A (strain DSM 15465 / Z2491).